A 226-amino-acid chain; its full sequence is Cytidylate kinase (226 aa).

10–18 (GPASSGKST) contributes to the ATP binding site.

It belongs to the cytidylate kinase family. Type 1 subfamily.

Its subcellular location is the cytoplasm. It catalyses the reaction CMP + ATP = CDP + ADP. The catalysed reaction is dCMP + ATP = dCDP + ADP. In Streptococcus pyogenes serotype M28 (strain MGAS6180), this protein is Cytidylate kinase.